The sequence spans 165 residues: MRVRESELPGIGQKVEMITRNRDKISIIIHHDGRRELYYFDENDHEECVASVQFDDAEARQMSAILGGMAYKPKALEQVESALDDLIIEWCKAEAGAPAIHQTIGDLNVGQEYHVTVIAIVKKNQDKQLNPSSETVIDEGDTLVISGEGTGLKRLIREKLTAKGA.

An RCK C-terminal domain is found at 76 to 161; the sequence is LEQVESALDD…LKRLIREKLT (86 aa).

This is an uncharacterized protein from Bacillus subtilis (strain 168).